A 437-amino-acid chain; its full sequence is Proton/glutamate-aspartate symporter (437 aa).

The Cytoplasmic portion of the chain corresponds to 1 to 5 (MKNIK). The chain crosses the membrane as a helical span at residues 6–26 (FSLAWQILFAMVLGILLGSYL). The Periplasmic portion of the chain corresponds to 27–50 (HYHSDSRDWLVVNLLSPAGDIFIH). A helical membrane pass occupies residues 51-71 (LIKMIVVPIVISTLVVGIAGV). Over 72–84 (GDAKQLGRIGAKT) the chain is Cytoplasmic. The chain crosses the membrane as a helical span at residues 85–105 (IIYFEVITTVAIILGITLANV). Over 106-159 (FQPGAGVDMSQLATVDISKYQSTTEAVQSSSHGIMGTILSLVPTNIVASMAKGE) the chain is Periplasmic. The helical transmembrane segment at 160–180 (MLPIIFFSVLFGLGLSSLPAT) threads the bilayer. The Cytoplasmic portion of the chain corresponds to 181 to 210 (HREPLVTVFRSISETMFKVTHMVMRYAPVG). A helical membrane pass occupies residues 211 to 231 (VFALIAVTVANFGFSSLWPLA). Position 232 (Lys-232) is a topological domain, periplasmic. A helical transmembrane segment spans residues 233-253 (LVLLVHFAILFFALVVLGIVA). At 254–292 (RLCGLSVWILIRILKDELILAYSTASSESVLPRIIEKME) the chain is on the cytoplasmic side. The helical transmembrane segment at 293 to 313 (AYGAPVSITSFVVPTGYSFNL) threads the bilayer. At 314-324 (DGSTLYQSIAA) the chain is on the periplasmic side. The chain crosses the membrane as a helical span at residues 325-345 (IFIAQLYGIDLSIWQEIILVL). Residues 346–361 (TLMVTSKGIAGVPGVS) lie on the Cytoplasmic side of the membrane. A helical membrane pass occupies residues 362–382 (FVVLLATLGSVGIPLEGLAFI). Topologically, residues 383 to 387 (AGVDR) are periplasmic. Residues 388 to 408 (ILDMARTALNVVGNALAVLVI) form a helical membrane-spanning segment. At 409-437 (AKWEHKFDRKKALAYEREVLGKFDKTADQ) the chain is on the cytoplasmic side.

This sequence belongs to the dicarboxylate/amino acid:cation symporter (DAACS) (TC 2.A.23) family. GltP subfamily.

It is found in the cell inner membrane. Its activity is regulated as follows. Glutamate uptake is inhibited by L-cysteate and beta-hydroxyaspartate. Inhibited by the uncoupler carbonylcyanide m-chlorophenylhydrazone (CCCP). In terms of biological role, catalyzes the proton-dependent, binding-protein-independent transport of glutamate and aspartate. In Escherichia coli (strain K12), this protein is Proton/glutamate-aspartate symporter.